Consider the following 325-residue polypeptide: 5-dehydro-2-deoxygluconokinase (325 aa).

Belongs to the carbohydrate kinase PfkB family.

It catalyses the reaction 5-dehydro-2-deoxy-D-gluconate + ATP = 6-phospho-5-dehydro-2-deoxy-D-gluconate + ADP + H(+). It functions in the pathway polyol metabolism; myo-inositol degradation into acetyl-CoA; acetyl-CoA from myo-inositol: step 5/7. Its function is as follows. Catalyzes the phosphorylation of 5-dehydro-2-deoxy-D-gluconate (2-deoxy-5-keto-D-gluconate or DKG) to 6-phospho-5-dehydro-2-deoxy-D-gluconate (DKGP). In Listeria monocytogenes serotype 4a (strain HCC23), this protein is 5-dehydro-2-deoxygluconokinase.